The following is a 555-amino-acid chain: Zinc transporter ZIP5 (555 aa).

The Extracellular portion of the chain corresponds to 1–242 (MGGQTVWMTL…HSQASKTSEG (242 aa)). The disordered stretch occupies residues 108 to 148 (KHPSQSISHSHSHEDHHPSQGTTNSPPLRESLDAKSALSGS). Residues 243-263 (FLIALGWASLALLVISLPSLV) form a helical membrane-spanning segment. Topologically, residues 264–314 (ALGMAPLLQPSVLQVFLCPMAGMAVGTLCGDALLHLMPHAIFSQHTDHQNA) are cytoplasmic. A helical membrane pass occupies residues 315–335 (VFKGLSVLGGLYLLFIFESLL). The Extracellular segment spans residues 336–408 (GLKQHFKNLK…DGIHNLTDGL (73 aa)). A compositionally biased stretch (polar residues) spans 363-374 (TSSANQNESSGH). The tract at residues 363 to 383 (TSSANQNESSGHGHSHGQAEP) is disordered. Residues 409–429 (AIGVAFSQSLTGGFSTAIAVF) form a helical membrane-spanning segment. At 430-452 (CHELPHELGDLAVLLSAGWPVRR) the chain is on the cytoplasmic side. The helical transmembrane segment at 453–473 (LLVFSGLSALLGFVGVLAGSA) threads the bilayer. The Extracellular portion of the chain corresponds to 474–482 (LGNHWASHS). The chain crosses the membrane as a helical span at residues 483–503 (PWILTLTAGVFLYVALADMMP). Topologically, residues 504–518 (EMLHGACGSVSPLKR) are cytoplasmic. Residues 519–539 (FLLQALGLLTGGAIMLCIALF) traverse the membrane as a helical segment. Residues 540-555 (EDHIAVSLGENSLGEN) lie on the Extracellular side of the membrane.

This sequence belongs to the ZIP transporter (TC 2.A.5) family.

It localises to the basolateral cell membrane. The catalysed reaction is Zn(2+)(in) = Zn(2+)(out). Functionally, uniporter that transports zinc(2+) into polarized cells of enterocytes, pancreatic acinar and endoderm cells across the basolateral membrane and participates, notably, in zinc excretion from the intestine by the uptake of zinc from the blood into the intestine. The transport mechanism is temperature- and concentration-dependent and saturable. Mediates zinc homeostasis that is essential for venous angiogenesis. The chain is Zinc transporter ZIP5 (slc39a5) from Danio rerio (Zebrafish).